A 153-amino-acid polypeptide reads, in one-letter code: DNA gyrase inhibitor 1 (153 aa).

It belongs to the DNA gyrase inhibitor family. As to quaternary structure, interacts with DNA gyrase.

Its subcellular location is the cytoplasm. Functionally, inhibits the supercoiling activity of DNA gyrase. Acts by inhibiting DNA gyrase at an early step, prior to (or at the step of) binding of DNA by the gyrase. It protects cells against toxins that target DNA gyrase, by inhibiting activity of these toxins and reducing the formation of lethal double-strand breaks in the cell. The protein is DNA gyrase inhibitor 1 of Dickeya dadantii (strain 3937) (Erwinia chrysanthemi (strain 3937)).